The sequence spans 161 residues: Phosphopantetheine adenylyltransferase (161 aa).

T9 lines the substrate pocket. ATP is bound by residues 9 to 10 (TF) and H17. Positions 41, 73, and 87 each coordinate substrate. Residues 88 to 90 (GMR), E98, and 123 to 129 (WSYVSST) contribute to the ATP site.

It belongs to the bacterial CoaD family. As to quaternary structure, homohexamer. Requires Mg(2+) as cofactor.

The protein localises to the cytoplasm. It catalyses the reaction (R)-4'-phosphopantetheine + ATP + H(+) = 3'-dephospho-CoA + diphosphate. The protein operates within cofactor biosynthesis; coenzyme A biosynthesis; CoA from (R)-pantothenate: step 4/5. Reversibly transfers an adenylyl group from ATP to 4'-phosphopantetheine, yielding dephospho-CoA (dPCoA) and pyrophosphate. In Actinobacillus succinogenes (strain ATCC 55618 / DSM 22257 / CCUG 43843 / 130Z), this protein is Phosphopantetheine adenylyltransferase.